Here is a 251-residue protein sequence, read N- to C-terminus: Ribosome maturation factor RimP (251 aa).

The segment at 198–251 (NLGLEPPAAPHAKISEKTTKNTKPKKKPAPTNTKKHRLAAERARRGEIEPDEGD) is disordered. Residues 217 to 234 (KNTKPKKKPAPTNTKKHR) show a composition bias toward basic residues. A compositionally biased stretch (basic and acidic residues) spans 235 to 245 (LAAERARRGEI).

It belongs to the RimP family.

Its subcellular location is the cytoplasm. Functionally, required for maturation of 30S ribosomal subunits. This is Ribosome maturation factor RimP from Bradyrhizobium diazoefficiens (strain JCM 10833 / BCRC 13528 / IAM 13628 / NBRC 14792 / USDA 110).